The primary structure comprises 369 residues: Anhydro-N-acetylmuramic acid kinase (369 aa).

11 to 18 (GTSMDAVD) serves as a coordination point for ATP.

This sequence belongs to the anhydro-N-acetylmuramic acid kinase family.

It carries out the reaction 1,6-anhydro-N-acetyl-beta-muramate + ATP + H2O = N-acetyl-D-muramate 6-phosphate + ADP + H(+). The protein operates within amino-sugar metabolism; 1,6-anhydro-N-acetylmuramate degradation. It functions in the pathway cell wall biogenesis; peptidoglycan recycling. Functionally, catalyzes the specific phosphorylation of 1,6-anhydro-N-acetylmuramic acid (anhMurNAc) with the simultaneous cleavage of the 1,6-anhydro ring, generating MurNAc-6-P. Is required for the utilization of anhMurNAc either imported from the medium or derived from its own cell wall murein, and thus plays a role in cell wall recycling. In Idiomarina loihiensis (strain ATCC BAA-735 / DSM 15497 / L2-TR), this protein is Anhydro-N-acetylmuramic acid kinase.